A 346-amino-acid polypeptide reads, in one-letter code: Leucine zipper protein 2 (346 aa).

Residues 1–17 (MKFIGAVYLLFLLPALS) form the signal peptide. 2 N-linked (GlcNAc...) asparagine glycosylation sites follow: Asn19 and Asn131. Residues 41-209 (RHLSKTSKEL…QLKALKDTVH (169 aa)) are a coiled coil. The interval 162–190 (LRYGKKDLIFKGQQLMDLENKLKVAKDEL) is leucine-zipper. N-linked (GlcNAc...) asparagine glycans are attached at residues Asn241 and Asn296. The tract at residues 271-346 (SAVMRRESTG…LKKTQSDKHN (76 aa)) is disordered. Over residues 293-324 (CSHNQTESSSVMKKTFGHSQSKTPEQNGQGQA) the composition is skewed to polar residues. Over residues 326 to 346 (TAEESVKTDGELKKTQSDKHN) the composition is skewed to basic and acidic residues.

It is found in the secreted. The chain is Leucine zipper protein 2 (luzp2) from Danio rerio (Zebrafish).